Here is a 439-residue protein sequence, read N- to C-terminus: L-tryptophan decarboxylase (439 aa).

Belongs to the phosphatidylserine decarboxylase family.

It catalyses the reaction L-tryptophan + H(+) = tryptamine + CO2. Its pathway is secondary metabolite biosynthesis. L-tryptophan decarboxylase; part of the gene cluster that mediates the biosynthesis of psilocybin, a psychotropic tryptamine-derived natural product. The first step in the pathway is the decarboxylation of L-tryptophan to tryptamine by the decarboxylase psiD. PsiD does not decarboxylate phenylalanine, tyrosine, or 5-hydroxy- L -tryptophan (5-HTP). 4-hydroxy-L-tryptophan is accepted as substrate by psiD as well. The cytochrome P450 monooxygenase psiH then converts tryptamine to 4-hydroxytryptamine. The kinase psiK catalyzes the 4-O-phosphorylation step by converting 4-hydroxytryptamine into norbaeocystin. The methyltransferase psiM then catalyzes iterative methyl transfer to the amino group of norbaeocystin to yield psilocybin via a monomethylated intermediate, baeocystin. 4-hydroxy-6-methyl-l-tryptophancan also be converted the decarboxylase PsiD, kinase PsiK, and methyltransferase PsiM into respectively 6-methyl-norbaeocystin, 6-methylbaeocystin, and 6-methylpsilocybin. The sequence is that of L-tryptophan decarboxylase from Psilocybe cyanescens.